The chain runs to 347 residues: Phosphoribosylformylglycinamidine cyclo-ligase (347 aa).

It belongs to the AIR synthase family.

It is found in the cytoplasm. It catalyses the reaction 2-formamido-N(1)-(5-O-phospho-beta-D-ribosyl)acetamidine + ATP = 5-amino-1-(5-phospho-beta-D-ribosyl)imidazole + ADP + phosphate + H(+). The protein operates within purine metabolism; IMP biosynthesis via de novo pathway; 5-amino-1-(5-phospho-D-ribosyl)imidazole from N(2)-formyl-N(1)-(5-phospho-D-ribosyl)glycinamide: step 2/2. The sequence is that of Phosphoribosylformylglycinamidine cyclo-ligase from Prochlorococcus marinus (strain MIT 9301).